A 106-amino-acid polypeptide reads, in one-letter code: UPF0091 protein RP266 (106 aa).

The protein belongs to the UPF0091 family.

The protein is UPF0091 protein RP266 of Rickettsia prowazekii (strain Madrid E).